Consider the following 259-residue polypeptide: DNA-directed RNA polymerase 30 kDa polypeptide (259 aa).

The TFIIS-type zinc-finger motif lies at 155 to 195; sequence YNTPCPNCKSRNTTPMMIQTRAADEPPLVRHACRDCKQHFK. Residues C159, C162, C187, and C190 each contribute to the Zn(2+) site. The segment at 220 to 259 is disordered; that stretch reads EILPDNNPSPPESPEPASPIDDGLIRATFDRNDEPPEDDE. Residues 226 to 236 show a composition bias toward pro residues; sequence NPSPPESPEPA.

Belongs to the poxviridae DNA-directed RNA polymerase 30 kDa subunit family. The DNA-dependent RNA polymerase (vRNAP) consists of eight subunits encoded by early viral genes and termed according to their apparent molecular masses Rpo147, Rpo132, Rpo35, Rpo30, Rpo22, Rpo19, Rpo18, and Rpo7. The same holoenzyme, with the addition of the transcription-specificity factor RAP94, is used for early gene expression.

It localises to the virion. The protein localises to the host cytoplasm. It catalyses the reaction RNA(n) + a ribonucleoside 5'-triphosphate = RNA(n+1) + diphosphate. Functionally, part of the DNA-dependent RNA polymerase which catalyzes the transcription of viral DNA into RNA using the four ribonucleoside triphosphates as substrates. Responsible for the transcription of early, intermediate and late genes. DNA-dependent RNA polymerase associates with the early transcription factor (ETF), itself composed of OPG118 and OPG134, thereby allowing the early genes transcription. Late transcription, and probably also intermediate transcription, require newly synthesized RNA polymerase. The protein is DNA-directed RNA polymerase 30 kDa polypeptide (OPG066) of Homo sapiens (Human).